We begin with the raw amino-acid sequence, 363 residues long: MSNLEKQIRLKNLLESLNGSKSQADLKKESQTLIDIFKQTRQKMIHDQQSNLHPVTSIQGKKLLNLRKALQNHQKHRDNIKVVKTNAEPVSTHDQTVDSNSDSSSSETLIDTSTSSSFDNIKRWLHETNSNESQSKGRPSEYTHVNSPDSGVSSKSGQLSMLTQDSNQILLLIKQLTAKYNMLESFFINSFEQLIALFDNFYFLSSLIGFNTSNSNSKITRLLRNFIKQASKIWLVIIFLTVKNLFIRMIKLNRTEKKVKLERDILMSRSPNSSIQYEYDAMLLTIRTSKISTFLEMLGNVNEFAFYLIQVMNWKVSKKVKNILAGISWIMSIYRMSKDEIQETNPSINNGLKSSDDIIDEYA.

The Cytoplasmic segment spans residues Met-1–Gln-193. Disordered regions lie at residues Gln-71–Thr-114 and Thr-128–Gly-157. Residues Val-97–Thr-114 show a composition bias toward low complexity. The chain crosses the membrane as a helical span at residues Leu-194 to Ser-213. Topologically, residues Asn-214 to Lys-232 are peroxisomal. A helical membrane pass occupies residues Ile-233–Ile-250. Residues Lys-251 to Ala-363 lie on the Cytoplasmic side of the membrane.

It is found in the peroxisome membrane. In terms of biological role, controls peroxisome morphology and abundance under conditions of peroxisome proliferation such as oleate and methanol media. Has additional function(s), which is not present in its functional homologs such as Saccharomyces cerevisea PEX34 or human PEX16. This is Peroxin-36 from Komagataella phaffii (strain GS115 / ATCC 20864) (Yeast).